A 240-amino-acid chain; its full sequence is Tetrahydromethanopterin S-methyltransferase subunit A (240 aa).

Over Met-1 to Lys-218 the chain is Cytoplasmic. His-85 contributes to the 5-hydroxybenzimidazolylcob(I)amide binding site. Residues Ile-219–Gly-239 form a helical membrane-spanning segment. Position 240 (Arg-240) is a topological domain, extracellular.

This sequence belongs to the MtrA family. The complex is composed of 8 subunits; MtrA, MtrB, MtrC, MtrD, MtrE, MtrF, MtrG and MtrH. It depends on 5-hydroxybenzimidazolylcob(I)amide as a cofactor.

The protein resides in the cell membrane. It catalyses the reaction 5-methyl-5,6,7,8-tetrahydromethanopterin + coenzyme M + 2 Na(+)(in) = 5,6,7,8-tetrahydromethanopterin + methyl-coenzyme M + 2 Na(+)(out). It functions in the pathway one-carbon metabolism; methanogenesis from CO(2); methyl-coenzyme M from 5,10-methylene-5,6,7,8-tetrahydromethanopterin: step 2/2. In terms of biological role, part of a complex that catalyzes the formation of methyl-coenzyme M and tetrahydromethanopterin from coenzyme M and methyl-tetrahydromethanopterin. This is an energy-conserving, sodium-ion translocating step. This Methanosarcina barkeri (strain Fusaro / DSM 804) protein is Tetrahydromethanopterin S-methyltransferase subunit A.